A 587-amino-acid polypeptide reads, in one-letter code: Aspartate--tRNA(Asp/Asn) ligase (587 aa).

Glutamate 173 serves as a coordination point for L-aspartate. The tract at residues 197 to 200 (QLFK) is aspartate. Arginine 219 is an L-aspartate binding site. Residues 219–221 (RDE) and glutamine 228 each bind ATP. Histidine 448 lines the L-aspartate pocket. Glutamate 481 is a binding site for ATP. Arginine 488 is a binding site for L-aspartate. Position 533-536 (533-536 (GLDR)) interacts with ATP.

The protein belongs to the class-II aminoacyl-tRNA synthetase family. Type 1 subfamily. As to quaternary structure, homodimer.

Its subcellular location is the cytoplasm. It catalyses the reaction tRNA(Asx) + L-aspartate + ATP = L-aspartyl-tRNA(Asx) + AMP + diphosphate. Its function is as follows. Aspartyl-tRNA synthetase with relaxed tRNA specificity since it is able to aspartylate not only its cognate tRNA(Asp) but also tRNA(Asn). Reaction proceeds in two steps: L-aspartate is first activated by ATP to form Asp-AMP and then transferred to the acceptor end of tRNA(Asp/Asn). The chain is Aspartate--tRNA(Asp/Asn) ligase from Alcanivorax borkumensis (strain ATCC 700651 / DSM 11573 / NCIMB 13689 / SK2).